The primary structure comprises 96 residues: uncharacterized protein (96 aa).

A glycan (N-linked (GlcNAc...) asparagine) is linked at asparagine 4. Residues 59 to 81 (VFFTIFDTIITIIVRSGIPFPLL) form a helical membrane-spanning segment.

The protein resides in the membrane. This is an uncharacterized protein from Saccharomyces cerevisiae (strain ATCC 204508 / S288c) (Baker's yeast).